A 366-amino-acid polypeptide reads, in one-letter code: Aminomethyltransferase (366 aa).

This sequence belongs to the GcvT family. The glycine cleavage system is composed of four proteins: P, T, L and H.

It carries out the reaction N(6)-[(R)-S(8)-aminomethyldihydrolipoyl]-L-lysyl-[protein] + (6S)-5,6,7,8-tetrahydrofolate = N(6)-[(R)-dihydrolipoyl]-L-lysyl-[protein] + (6R)-5,10-methylene-5,6,7,8-tetrahydrofolate + NH4(+). The glycine cleavage system catalyzes the degradation of glycine. This is Aminomethyltransferase from Bacillus cereus (strain ZK / E33L).